The primary structure comprises 432 residues: MRVVILGSGVVGVTSAWYLSQAGHDVTVIDRESGPAQETSAANAGQISPGYAAPWAAPGVPLKAIKWMFQRHAPLAVRLDGTPFQLKWMWQMLRNCDTRHYMENKGRMVRLAEYSRDCLKTLRAATGIEYEGRQGGTLQLFRTAQQYENATRDIAVLEDAGVPYQLLESSRLAEVEPALAEVAHKLTGGLRLPNDETGDCQLFTQRLARMAEQAGVTFRFNTPVEKLLYENDQIYGVKCADEIIKADAYVMAFGSYSTAMLKGIVDIPVYPLKGYSLTIPIVEPDGAPVSTILDETYKIAITRFDKRIRVGGMAEIVGFNTDLLQPRRETLEMVVRDLFPRGGHIEQATFWTGLRPMTPDGTPVVGRTRYKNLWLNTGHGTLGWTMACGSGQLLSDILSGRTPAIPYDDLSVARYRSDFTPTPPQRLHSAHN.

Residue 3–17 (VVILGSGVVGVTSAW) coordinates FAD.

This sequence belongs to the DadA oxidoreductase family. The cofactor is FAD.

The enzyme catalyses a D-alpha-amino acid + A + H2O = a 2-oxocarboxylate + AH2 + NH4(+). It participates in amino-acid degradation; D-alanine degradation; NH(3) and pyruvate from D-alanine: step 1/1. In terms of biological role, oxidative deamination of D-amino acids. This is D-amino acid dehydrogenase from Salmonella dublin (strain CT_02021853).